The chain runs to 445 residues: 3-phosphoshikimate 1-carboxyvinyltransferase (445 aa).

Residues Lys21, Ser22, and Arg26 each contribute to the 3-phosphoshikimate site. A phosphoenolpyruvate-binding site is contributed by Lys21. Residues Gly92 and Arg120 each contribute to the phosphoenolpyruvate site. Residues Ser165, Gln166, Asp307, and Lys334 each contribute to the 3-phosphoshikimate site. Position 166 (Gln166) interacts with phosphoenolpyruvate. Catalysis depends on Asp307, which acts as the Proton acceptor. Phosphoenolpyruvate contacts are provided by Arg338, Arg379, and Lys405.

It belongs to the EPSP synthase family. As to quaternary structure, monomer.

The protein resides in the cytoplasm. It catalyses the reaction 3-phosphoshikimate + phosphoenolpyruvate = 5-O-(1-carboxyvinyl)-3-phosphoshikimate + phosphate. It participates in metabolic intermediate biosynthesis; chorismate biosynthesis; chorismate from D-erythrose 4-phosphate and phosphoenolpyruvate: step 6/7. Catalyzes the transfer of the enolpyruvyl moiety of phosphoenolpyruvate (PEP) to the 5-hydroxyl of shikimate-3-phosphate (S3P) to produce enolpyruvyl shikimate-3-phosphate and inorganic phosphate. This chain is 3-phosphoshikimate 1-carboxyvinyltransferase, found in Chlamydia felis (strain Fe/C-56) (Chlamydophila felis).